Reading from the N-terminus, the 451-residue chain is UDP-glycosyltransferase 76C4 (451 aa).

UDP-alpha-D-glucose is bound by residues Ser273, 332–334 (APQ), 349–357 (HNGWNSTVE), and 371–374 (RWDQ).

This sequence belongs to the UDP-glycosyltransferase family.

This Arabidopsis thaliana (Mouse-ear cress) protein is UDP-glycosyltransferase 76C4 (UGT76C4).